Consider the following 524-residue polypeptide: Na(+)/H(+) antiporter NhaB (524 aa).

The next 12 membrane-spanning stretches (helical) occupy residues Ile23–Ala43, Gly44–Leu64, Leu97–Phe117, Leu120–Phe140, Phe144–Ile164, Leu203–Pro223, Phe236–Leu256, Ala304–Ile324, Phe354–Phe374, Leu392–Val412, Ala448–Ile468, and Val476–Phe496.

Belongs to the NhaB Na(+)/H(+) (TC 2.A.34) antiporter family.

The protein resides in the cell inner membrane. It carries out the reaction 2 Na(+)(in) + 3 H(+)(out) = 2 Na(+)(out) + 3 H(+)(in). In terms of biological role, na(+)/H(+) antiporter that extrudes sodium in exchange for external protons. The polypeptide is Na(+)/H(+) antiporter NhaB (Edwardsiella ictaluri (strain 93-146)).